Consider the following 155-residue polypeptide: MSIIDNRKATHDYFIEDRYEAGMVLEGWEVKAIRDGRVQLKESYVIVRDGEIYLLGMHVSPLPTASTHIRPDATRTRKLLLKAEEIRKLIGKVEQRGYTLVPLNLHYKNGRIKLDFALGRGKKLYDKRDTAREKDWQREKERVLKHDTRVNQRDS.

This sequence belongs to the SmpB family.

It localises to the cytoplasm. Functionally, required for rescue of stalled ribosomes mediated by trans-translation. Binds to transfer-messenger RNA (tmRNA), required for stable association of tmRNA with ribosomes. tmRNA and SmpB together mimic tRNA shape, replacing the anticodon stem-loop with SmpB. tmRNA is encoded by the ssrA gene; the 2 termini fold to resemble tRNA(Ala) and it encodes a 'tag peptide', a short internal open reading frame. During trans-translation Ala-aminoacylated tmRNA acts like a tRNA, entering the A-site of stalled ribosomes, displacing the stalled mRNA. The ribosome then switches to translate the ORF on the tmRNA; the nascent peptide is terminated with the 'tag peptide' encoded by the tmRNA and targeted for degradation. The ribosome is freed to recommence translation, which seems to be the essential function of trans-translation. The polypeptide is SsrA-binding protein (Bordetella bronchiseptica (strain ATCC BAA-588 / NCTC 13252 / RB50) (Alcaligenes bronchisepticus)).